Reading from the N-terminus, the 485-residue chain is MNEILRKSYAELKSSLSLGKISATELATACIERIKEVDGSVKAFLSLDEKRILDAASESDARRKSGNPLSEFDGMPIAIKDNICIRDSITSCASKILENYKSPFHATVIEKLIAKGFVLIPRANMDEFAMGSSTENSAFQTTRNPFDLERIPGGSSGGSAAAVAASMVPLALGSDTGGSVRQPASLCGLYGLKPTYGTVSRYGLVAYASSLDQIGPFSKELQGCIDLYSVISGKDERDSTSLNHPGFSAPWTPDFKGLKIGTIKMTSEIQPEVVKAYEKVLNQLKEKGATLVELDFSKFDFAIPIYYIIATAECSSNLSRFDGIRFGSRKDKTGKLEDLFVDSRTTGFGSEVKRRILLGTFSLSAGYYDAYYGTAQKARVLIRKEYDSFFSKVDFILQPTSPTTAFKVGEKTKDPIQMYKADIWTTSVNLAGIPAISVPMGTDEKGLPIGLQITAPHFQEGKLFGAAQAIGALEDLNIKFPENIG.

Residues K80 and S155 each act as charge relay system in the active site. The Acyl-ester intermediate role is filled by S179.

It belongs to the amidase family. GatA subfamily. As to quaternary structure, heterotrimer of A, B and C subunits.

The catalysed reaction is L-glutamyl-tRNA(Gln) + L-glutamine + ATP + H2O = L-glutaminyl-tRNA(Gln) + L-glutamate + ADP + phosphate + H(+). In terms of biological role, allows the formation of correctly charged Gln-tRNA(Gln) through the transamidation of misacylated Glu-tRNA(Gln) in organisms which lack glutaminyl-tRNA synthetase. The reaction takes place in the presence of glutamine and ATP through an activated gamma-phospho-Glu-tRNA(Gln). The chain is Glutamyl-tRNA(Gln) amidotransferase subunit A from Leptospira borgpetersenii serovar Hardjo-bovis (strain L550).